The sequence spans 566 residues: Folate-like transporter DDB_G0272544 (566 aa).

Positions 24 to 81 (RNQDEDENENENNDNLENDNNKRNYISINNYEPYKEIDNNNNKNNNNNNIINNNNKIN) form a coiled coil. A disordered region spans residues 25–46 (NQDEDENENENNDNLENDNNKR). Residues 27–40 (DEDENENENNDNLE) show a composition bias toward acidic residues. 11 helical membrane passes run 148–168 (VFLL…IIII), 171–191 (VAKI…WMIL), 194–214 (ITEG…YFSL), 226–246 (VNAG…LLVE), 252–272 (VYLL…ALGF), 304–324 (IWSG…QNLF), 332–352 (SWNG…AIIP), 364–384 (GIIL…MGFG), 388–408 (VVSA…SPIV), 420–440 (IGVL…LVQS), and 458–478 (YGAC…FLFL). A coiled-coil region spans residues 517-544 (YNANIIDFENNNNNNNNNNNNNNNNNNN). Residues 526-556 (NNNNNNNNNNNNNNNNNNNNNNNNNNNNNNN) are compositionally biased toward low complexity. The tract at residues 526–566 (NNNNNNNNNNNNNNNNNNNNNNNNNNNNNNNVGIGGNDNFK) is disordered.

Belongs to the reduced folate carrier (RFC) transporter (TC 2.A.48) family.

The protein resides in the membrane. Functionally, folate transporter. This chain is Folate-like transporter DDB_G0272544, found in Dictyostelium discoideum (Social amoeba).